The following is a 210-amino-acid chain: Somatotropin-2 (210 aa).

The N-terminal stretch at 1–22 (MGQVFLLMPVLLVSCFLGQGAA) is a signal peptide. A Zn(2+)-binding site is contributed by His-38. A disulfide bridge links Cys-71 with Cys-183. Glu-192 contributes to the Zn(2+) binding site. Cysteines 200 and 208 form a disulfide.

It belongs to the somatotropin/prolactin family.

The protein resides in the secreted. Growth hormone plays an important role in growth control and is involved in the regulation of several anabolic processes. Implicated as an osmoregulatory substance important for seawater adaptation. This is Somatotropin-2 (gh2) from Oncorhynchus mykiss (Rainbow trout).